The following is a 78-amino-acid chain: Large ribosomal subunit protein eL20 (78 aa).

It belongs to the eukaryotic ribosomal protein eL20 family. In terms of assembly, part of the 50S ribosomal subunit. Binds 23S rRNA.

The protein is Large ribosomal subunit protein eL20 of Pyrobaculum islandicum (strain DSM 4184 / JCM 9189 / GEO3).